Reading from the N-terminus, the 281-residue chain is NADPH-dependent 7-cyano-7-deazaguanine reductase (281 aa).

Isoleucine 88–serine 90 contacts substrate. Residue serine 90–lysine 91 coordinates NADPH. Cysteine 189 (thioimide intermediate) is an active-site residue. Residue aspartate 196 is the Proton donor of the active site. Histidine 228 to glutamate 229 contacts substrate. Position 257–258 (arginine 257–glycine 258) interacts with NADPH.

Belongs to the GTP cyclohydrolase I family. QueF type 2 subfamily. In terms of assembly, homodimer.

Its subcellular location is the cytoplasm. The catalysed reaction is 7-aminomethyl-7-carbaguanine + 2 NADP(+) = 7-cyano-7-deazaguanine + 2 NADPH + 3 H(+). Its pathway is tRNA modification; tRNA-queuosine biosynthesis. Catalyzes the NADPH-dependent reduction of 7-cyano-7-deazaguanine (preQ0) to 7-aminomethyl-7-deazaguanine (preQ1). The chain is NADPH-dependent 7-cyano-7-deazaguanine reductase from Yersinia enterocolitica serotype O:8 / biotype 1B (strain NCTC 13174 / 8081).